Reading from the N-terminus, the 648-residue chain is Serine/threonine-protein phosphatase 1 regulatory subunit PIG1 (648 aa).

A compositionally biased stretch (low complexity) spans 20–51; the sequence is STSSFVSSTTSNSFSPLEDSTSASSSTSSSSS. The tract at residues 20 to 52 is disordered; the sequence is STSSFVSSTTSNSFSPLEDSTSASSSTSSSSSG. The region spanning 201 to 331 is the CBM21 domain; the sequence is HSLELSDPVS…NNDYKNYEIT (131 aa). Polar residues predominate over residues 593 to 609; that stretch reads RESSSPEISPLNTTTSL. Residues 593–629 form a disordered region; that stretch reads RESSSPEISPLNTTTSLPFFPGDNMSDSSGEYEERTS.

Its function is as follows. Regulates the activity of glycogen synthase. It is most probably a regulatory subunit for protein phosphatase type 1. The protein is Serine/threonine-protein phosphatase 1 regulatory subunit PIG1 (PIG1) of Saccharomyces cerevisiae (strain ATCC 204508 / S288c) (Baker's yeast).